The chain runs to 209 residues: C-type lectin domain family 6 member A (209 aa).

Over 1-20 (MVQERHPQRKGVCWTLRLWS) the chain is Cytoplasmic. The helical; Signal-anchor for type II membrane protein transmembrane segment at 21-43 (TAVISMLLLSTCFIASCMVTYQF) threads the bilayer. The Extracellular segment spans residues 44 to 209 (TMEKPNRRLS…SICETKKIYL (166 aa)). 2 disulfide bridges follow: Cys64–Cys78 and Cys79–Cys90. Positions 86–203 (FGSSCYLIST…CDSKHNSICE (118 aa)) constitute a C-type lectin domain. 3 residues coordinate Ca(2+): Val116, Asn118, and Glu122. An N-linked (GlcNAc...) asparagine glycan is attached at Asn131. 3 residues coordinate Ca(2+): Glu168, Asn170, and Glu174. Residues 168 to 170 (EPN), Glu174, Trp182, and 190 to 191 (ND) each bind alpha-D-mannopyranose. Cys176 and Cys194 are oxidised to a cystine. Asn190, Asp191, and Glu203 together coordinate Ca(2+).

In terms of assembly, associated with FCER1G. Heterodimer with CLEC4D; this heterodimer forms a pattern recognition receptor (PRR) against fungal infection.

The protein resides in the cell membrane. Calcium-dependent lectin that acts as a pattern recognition receptor (PRR) of the innate immune system: specifically recognizes and binds alpha-mannans on C.albicans hypheas. Binding of C.albicans alpha-mannans to this receptor complex leads to phosphorylation of the immunoreceptor tyrosine-based activation motif (ITAM) of FCER1G, triggering activation of SYK, CARD9 and NF-kappa-B, consequently driving maturation of antigen-presenting cells and shaping antigen-specific priming of T-cells toward effector T-helper 1 and T-helper 17 cell subtypes. Also recognizes, in a mannose-dependent manner, allergens from house dust mite and fungi, by promoting cysteinyl leukotriene production. Recognizes soluble elements from the eggs of Shistosoma mansoni altering adaptive immune responses. The chain is C-type lectin domain family 6 member A (CLEC6A) from Rattus norvegicus (Rat).